We begin with the raw amino-acid sequence, 228 residues long: Lipoprotein-releasing system ATP-binding protein LolD (228 aa).

The 224-residue stretch at 5 to 228 folds into the ABC transporter domain; it reads FALSAISKSF…SGTLQNYTDY (224 aa). 40–47 is an ATP binding site; the sequence is GPSGSGKS.

The protein belongs to the ABC transporter superfamily. Lipoprotein translocase (TC 3.A.1.125) family. In terms of assembly, the complex is composed of two ATP-binding proteins (LolD) and two transmembrane proteins (LolC and LolE).

It localises to the cell inner membrane. Functionally, part of the ABC transporter complex LolCDE involved in the translocation of mature outer membrane-directed lipoproteins, from the inner membrane to the periplasmic chaperone, LolA. Responsible for the formation of the LolA-lipoprotein complex in an ATP-dependent manner. This is Lipoprotein-releasing system ATP-binding protein LolD from Ehrlichia ruminantium (strain Gardel).